A 514-amino-acid polypeptide reads, in one-letter code: Antiseptic resistance protein (514 aa).

The Cytoplasmic segment spans residues Met-1 to Val-23. Residues Leu-24 to Ala-41 form a helical membrane-spanning segment. Residues Leu-42–Leu-57 lie on the Extracellular side of the membrane. A helical transmembrane segment spans residues Trp-58–Ser-75. The Cytoplasmic segment spans residues Ala-76–Ala-86. A helical transmembrane segment spans residues Leu-87–Ala-104. The Extracellular portion of the chain corresponds to Glu-105–Ala-112. Residues Ile-113–Ser-130 form a helical membrane-spanning segment. The Cytoplasmic portion of the chain corresponds to Met-131–Leu-146. Residues Ala-147 to Gly-164 form a helical membrane-spanning segment. At Gly-165–Ser-172 the chain is on the extracellular side. Residues Trp-173–Ala-190 traverse the membrane as a helical segment. Residues Gly-191–Ser-207 are Cytoplasmic-facing. A helical membrane pass occupies residues Trp-208–Trp-225. The Extracellular segment spans residues Ser-226–Asp-237. A helical transmembrane segment spans residues Ile-238 to Val-255. Over Lys-256 to Ala-278 the chain is Cytoplasmic. A helical transmembrane segment spans residues Gly-279–Leu-295. Residues Leu-296 to Tyr-315 are Extracellular-facing. Residues Leu-316–Leu-333 form a helical membrane-spanning segment. Over Ala-334–Ile-341 the chain is Cytoplasmic. The helical transmembrane segment at Val-342 to Phe-360 threads the bilayer. Topologically, residues Gly-361–Met-369 are extracellular. The helical transmembrane segment at Ala-370–Ser-387 threads the bilayer. Residues Ala-388–Ser-408 lie on the Cytoplasmic side of the membrane. The helical transmembrane segment at Met-409–Ser-426 threads the bilayer. At Met-427–Ala-481 the chain is on the extracellular side. The chain crosses the membrane as a helical span at residues Phe-482–Val-499. Topologically, residues Val-500 to Lys-514 are cytoplasmic.

It belongs to the major facilitator superfamily.

It is found in the cell membrane. In terms of biological role, confers export-mediated resistance against antiseptic and disinfectant compounds such as intercalating dyes, quaternary ammonium salts and diamidines. The polypeptide is Antiseptic resistance protein (qacA) (Staphylococcus aureus (strain Mu50 / ATCC 700699)).